The primary structure comprises 505 residues: Maturase K (505 aa).

This sequence belongs to the intron maturase 2 family. MatK subfamily.

Its subcellular location is the plastid. It localises to the chloroplast. Its function is as follows. Usually encoded in the trnK tRNA gene intron. Probably assists in splicing its own and other chloroplast group II introns. The chain is Maturase K from Calycanthus occidentalis (Spice bush).